Here is a 137-residue protein sequence, read N- to C-terminus: Probable glycine cleavage system H protein 1 (137 aa).

Residues 31–113 enclose the Lipoyl-binding domain; the sequence is VAVIGITDYA…YGEGWIFKLK (83 aa). K72 is modified (N6-lipoyllysine).

The protein belongs to the GcvH family. In terms of assembly, the glycine cleavage system is composed of four proteins: P, T, L and H. (R)-lipoate is required as a cofactor.

The glycine cleavage system catalyzes the degradation of glycine. The H protein shuttles the methylamine group of glycine from the P protein to the T protein. The polypeptide is Probable glycine cleavage system H protein 1 (Saccharolobus solfataricus (strain ATCC 35092 / DSM 1617 / JCM 11322 / P2) (Sulfolobus solfataricus)).